Consider the following 121-residue polypeptide: uncharacterized protein (121 aa).

Residues 9–29 (LTILIASIYIIFFVNAAPTLY) traverse the membrane as a helical segment. The interval 91 to 121 (EELPTYPPTMTTPLETTPLDTSPPVLPSAIP) is disordered. The segment covering 98–113 (PTMTTPLETTPLDTSP) has biased composition (low complexity).

The protein localises to the host membrane. This is an uncharacterized protein from Alcelaphine herpesvirus 1 (strain C500) (AlHV-1).